Here is a 532-residue protein sequence, read N- to C-terminus: Apolipoprotein N-acyltransferase (532 aa).

The next 6 helical transmembrane spans lie at 37–57 (IFVA…GAIA), 75–95 (WWFG…ALLV), 106–126 (LAVL…AMIA), 128–148 (LLWS…ALAE), 179–199 (VIGL…PALL), and 207–227 (TGIG…AWTL). Positions 245 to 494 (VQPSIAQAMK…VGVVDSYLPS (250 aa)) constitute a CN hydrolase domain. Glu289 functions as the Proton acceptor in the catalytic mechanism. Residue Lys353 is part of the active site. Cys406 functions as the Nucleophile in the catalytic mechanism. A helical membrane pass occupies residues 505–525 (GWIQTVLILLTLLAASVGLIL).

This sequence belongs to the CN hydrolase family. Apolipoprotein N-acyltransferase subfamily.

The protein resides in the cell inner membrane. The enzyme catalyses N-terminal S-1,2-diacyl-sn-glyceryl-L-cysteinyl-[lipoprotein] + a glycerophospholipid = N-acyl-S-1,2-diacyl-sn-glyceryl-L-cysteinyl-[lipoprotein] + a 2-acyl-sn-glycero-3-phospholipid + H(+). The protein operates within protein modification; lipoprotein biosynthesis (N-acyl transfer). Catalyzes the phospholipid dependent N-acylation of the N-terminal cysteine of apolipoprotein, the last step in lipoprotein maturation. This chain is Apolipoprotein N-acyltransferase, found in Brucella melitensis biotype 1 (strain ATCC 23456 / CCUG 17765 / NCTC 10094 / 16M).